The primary structure comprises 439 residues: Protein translocase subunit SecY (439 aa).

10 helical membrane-spanning segments follow: residues 19–39 (ILFT…TAPG), 68–88 (YSLF…VQLL), 116–136 (YITL…FQAM), 151–171 (LMIG…GEQI), 176–196 (FGSG…PSAI), 216–236 (WIFV…TTFV), 269–289 (VIPV…LQFL), 312–332 (WTGM…YSFV), 373–393 (VGSL…NVWG), and 396–416 (KIVA…IQAV).

Belongs to the SecY/SEC61-alpha family. As to quaternary structure, component of the Sec protein translocase complex. Heterotrimer consisting of SecY, SecE and SecG subunits. The heterotrimers can form oligomers, although 1 heterotrimer is thought to be able to translocate proteins. Interacts with the ribosome. Interacts with SecDF, and other proteins may be involved. Interacts with SecA.

Its subcellular location is the cell membrane. Its function is as follows. The central subunit of the protein translocation channel SecYEG. Consists of two halves formed by TMs 1-5 and 6-10. These two domains form a lateral gate at the front which open onto the bilayer between TMs 2 and 7, and are clamped together by SecE at the back. The channel is closed by both a pore ring composed of hydrophobic SecY resides and a short helix (helix 2A) on the extracellular side of the membrane which forms a plug. The plug probably moves laterally to allow the channel to open. The ring and the pore may move independently. This Lactococcus lactis subsp. cremoris (Streptococcus cremoris) protein is Protein translocase subunit SecY.